A 190-amino-acid chain; its full sequence is Protein PLANT CADMIUM RESISTANCE 8 (190 aa).

Residues 1 to 31 form a disordered region; sequence MGRVTTPSEEDSNNGLPVQQPGTPNQRTRVP. A compositionally biased stretch (polar residues) spans 13 to 28; that stretch reads NNGLPVQQPGTPNQRT. T23 is modified (phosphothreonine). A helical transmembrane segment spans residues 94-113; that stretch reads LGTFMYLLMMPALCSHWVMG.

It belongs to the cornifelin family.

Its subcellular location is the cell membrane. In terms of biological role, may be involved in heavy metals transport. In Arabidopsis thaliana (Mouse-ear cress), this protein is Protein PLANT CADMIUM RESISTANCE 8 (PCR8).